The chain runs to 191 residues: Glycerol-3-phosphate acyltransferase (191 aa).

Transmembrane regions (helical) follow at residues 7 to 27 (ILVL…SYIG), 51 to 71 (KLAV…VMLA), 80 to 100 (FVFM…WLSF), 115 to 135 (FIEY…FVIF), 139 to 159 (SLSS…HYSA), and 161 to 181 (ESIT…ENIV).

It belongs to the PlsY family. As to quaternary structure, probably interacts with PlsX.

It is found in the cell inner membrane. The enzyme catalyses an acyl phosphate + sn-glycerol 3-phosphate = a 1-acyl-sn-glycero-3-phosphate + phosphate. It participates in lipid metabolism; phospholipid metabolism. Catalyzes the transfer of an acyl group from acyl-phosphate (acyl-PO(4)) to glycerol-3-phosphate (G3P) to form lysophosphatidic acid (LPA). This enzyme utilizes acyl-phosphate as fatty acyl donor, but not acyl-CoA or acyl-ACP. The polypeptide is Glycerol-3-phosphate acyltransferase (Ehrlichia canis (strain Jake)).